The sequence spans 359 residues: GTP 3',8-cyclase 1 (359 aa).

The 221-residue stretch at R21–E241 folds into the Radical SAM core domain. R30 provides a ligand contact to GTP. Residues C37 and C41 each contribute to the [4Fe-4S] cluster site. An S-adenosyl-L-methionine-binding site is contributed by Y43. C44 contacts [4Fe-4S] cluster. R80 is a binding site for GTP. S-adenosyl-L-methionine is bound at residue G84. T115 provides a ligand contact to GTP. Residue S139 participates in S-adenosyl-L-methionine binding. Residue K176 participates in GTP binding. M210 contacts S-adenosyl-L-methionine. Residues C273 and C276 each coordinate [4Fe-4S] cluster. Residue R278–R280 coordinates GTP. C290 is a [4Fe-4S] cluster binding site.

The protein belongs to the radical SAM superfamily. MoaA family. In terms of assembly, monomer and homodimer. [4Fe-4S] cluster serves as cofactor.

It carries out the reaction GTP + AH2 + S-adenosyl-L-methionine = (8S)-3',8-cyclo-7,8-dihydroguanosine 5'-triphosphate + 5'-deoxyadenosine + L-methionine + A + H(+). The protein operates within cofactor biosynthesis; molybdopterin biosynthesis. Catalyzes the cyclization of GTP to (8S)-3',8-cyclo-7,8-dihydroguanosine 5'-triphosphate. The sequence is that of GTP 3',8-cyclase 1 from Mycobacterium tuberculosis (strain CDC 1551 / Oshkosh).